The chain runs to 480 residues: F-box only protein 3 (480 aa).

The F-box domain occupies 10 to 56 (LLTLESLPTDPLLLILSFVDYRDLINCCYVSRRLSQLSTHDPLWRRH). Residues 278 to 408 (VATTGDITVS…FHMACPTFRV (131 aa)) enclose the ApaG domain. The span at 419 to 459 (EYEEMEEEAEEEEEEENDDSADMDESDESDEDENESDEGEG) shows a compositional bias: acidic residues. The segment at 419-464 (EYEEMEEEAEEEEEEENDDSADMDESDESDEDENESDEGEGEERRR) is disordered.

As to quaternary structure, part of a SCF (SKP1-cullin-F-box) protein ligase complex SCF(FBXO3) consisting of FBXO3, SKP1, CUL1 and RBX1. Interacts with PML, interaction is direct and takes place either alone or within the SCF complex.

It is found in the nucleus. It functions in the pathway protein modification; protein ubiquitination. Functionally, substrate recognition component of the SCF (SKP1-CUL1-F-box protein)-type E3 ubiquitin ligase complex, SCF(FBXO3), which mediates the ubiquitination and subsequent proteasomal degradation of target proteins. Mediates the ubiquitination of HIPK2 and probably that of EP300, leading to rapid degradation by the proteasome. In the presence of PML, HIPK2 ubiquitination still occurs, but degradation is prevented. PML, HIPK2 and FBXO3 may act synergically to activate p53/TP53-dependent transactivation. The SCF(FBXO3) also acts as a regulator of inflammation by mediating ubiquitination and degradation of FBXL2 in response to lipopolysaccharide (LPS). The SCF(FBXO3) complex specifically recognizes FBXL2 phosphorylated at 'Thr-404' and promotes its ubiquitination. The chain is F-box only protein 3 (Fbxo3) from Rattus norvegicus (Rat).